Reading from the N-terminus, the 125-residue chain is Large ribosomal subunit protein bL12 (125 aa).

The protein belongs to the bacterial ribosomal protein bL12 family. Homodimer. Part of the ribosomal stalk of the 50S ribosomal subunit. Forms a multimeric L10(L12)X complex, where L10 forms an elongated spine to which 2 to 4 L12 dimers bind in a sequential fashion. Binds GTP-bound translation factors.

Forms part of the ribosomal stalk which helps the ribosome interact with GTP-bound translation factors. Is thus essential for accurate translation. In Helicobacter pylori (strain HPAG1), this protein is Large ribosomal subunit protein bL12.